A 493-amino-acid polypeptide reads, in one-letter code: Stage V sporulation protein AF (493 aa).

A run of 5 helical transmembrane segments spans residues 296 to 316 (FFGILASTLFLPIWFLFVLQP), 334 to 354 (IPIILQIFLADLGIEFLRMAA), 363 to 383 (TAMGLIAAVLIGQIAIEVGLF), 387 to 407 (VILYVSLAAIGTFTTPSYELS), and 418 to 438 (MILVALFHIKGLVIGFTVLII).

This sequence belongs to the GerABKA family.

It is found in the cell membrane. This chain is Stage V sporulation protein AF (spoVAF), found in Bacillus subtilis (strain 168).